Consider the following 260-residue polypeptide: Ribonuclease PH (260 aa).

Phosphate contacts are provided by residues arginine 88 and 126-128 (GTR).

The protein belongs to the RNase PH family. As to quaternary structure, homohexameric ring arranged as a trimer of dimers.

The catalysed reaction is tRNA(n+1) + phosphate = tRNA(n) + a ribonucleoside 5'-diphosphate. Functionally, phosphorolytic 3'-5' exoribonuclease that plays an important role in tRNA 3'-end maturation. Removes nucleotide residues following the 3'-CCA terminus of tRNAs; can also add nucleotides to the ends of RNA molecules by using nucleoside diphosphates as substrates, but this may not be physiologically important. Probably plays a role in initiation of 16S rRNA degradation (leading to ribosome degradation) during starvation. This Mycolicibacterium gilvum (strain PYR-GCK) (Mycobacterium gilvum (strain PYR-GCK)) protein is Ribonuclease PH.